A 171-amino-acid polypeptide reads, in one-letter code: Co-chaperone protein HscB homolog (171 aa).

The J domain occupies 2–74 (NYFELFGLPI…LRRAEYLLSL (73 aa)).

The protein belongs to the HscB family. As to quaternary structure, interacts with HscA and stimulates its ATPase activity.

Its function is as follows. Co-chaperone involved in the maturation of iron-sulfur cluster-containing proteins. Seems to help targeting proteins to be folded toward HscA. This is Co-chaperone protein HscB homolog from Vibrio cholerae serotype O1 (strain M66-2).